A 255-amino-acid chain; its full sequence is Thiazole synthase (255 aa).

Lys-96 acts as the Schiff-base intermediate with DXP in catalysis. Residues Gly-157, 184–185 (AG), and 206–207 (NT) each bind 1-deoxy-D-xylulose 5-phosphate.

The protein belongs to the ThiG family. As to quaternary structure, homotetramer. Forms heterodimers with either ThiH or ThiS.

The protein resides in the cytoplasm. It catalyses the reaction [ThiS sulfur-carrier protein]-C-terminal-Gly-aminoethanethioate + 2-iminoacetate + 1-deoxy-D-xylulose 5-phosphate = [ThiS sulfur-carrier protein]-C-terminal Gly-Gly + 2-[(2R,5Z)-2-carboxy-4-methylthiazol-5(2H)-ylidene]ethyl phosphate + 2 H2O + H(+). It participates in cofactor biosynthesis; thiamine diphosphate biosynthesis. Functionally, catalyzes the rearrangement of 1-deoxy-D-xylulose 5-phosphate (DXP) to produce the thiazole phosphate moiety of thiamine. Sulfur is provided by the thiocarboxylate moiety of the carrier protein ThiS. In vitro, sulfur can be provided by H(2)S. The sequence is that of Thiazole synthase from Clostridium acetobutylicum (strain ATCC 824 / DSM 792 / JCM 1419 / IAM 19013 / LMG 5710 / NBRC 13948 / NRRL B-527 / VKM B-1787 / 2291 / W).